The chain runs to 236 residues: N-acetyl-alpha-D-glucosaminyl L-malate deacetylase 1 (236 aa).

The Zn(2+) site is built by His12, Asp15, and His113.

This sequence belongs to the PIGL family. Zn(2+) serves as cofactor.

The catalysed reaction is (S)-malyl N-acetyl-alpha-D-glucosaminide + H2O = (S)-malyl alpha-D-glucosaminide + acetate. Involved in bacillithiol (BSH) biosynthesis. Catalyzes the second step of the pathway, the deacetylation of N-acetylglucosaminylmalate (GlcNAc-Mal) to glucosamine malate (GlcN-Mal). This chain is N-acetyl-alpha-D-glucosaminyl L-malate deacetylase 1, found in Bacillus subtilis (strain 168).